The primary structure comprises 74 residues: DNA-directed RNA polymerase subunit omega (74 aa).

The protein belongs to the RNA polymerase subunit omega family. As to quaternary structure, the RNAP catalytic core consists of 2 alpha, 1 beta/beta' and 1 omega subunit. When a sigma factor is associated with the core the holoenzyme is formed, which can initiate transcription.

It carries out the reaction RNA(n) + a ribonucleoside 5'-triphosphate = RNA(n+1) + diphosphate. Promotes RNA polymerase assembly. Latches the N- and C-terminal regions of the beta' subunit thereby facilitating its interaction with the beta and alpha subunits. In Helicobacter hepaticus (strain ATCC 51449 / 3B1), this protein is DNA-directed RNA polymerase subunit omega.